Reading from the N-terminus, the 284-residue chain is D-tagatose-1,6-bisphosphate aldolase subunit GatY (284 aa).

D82 (proton donor) is an active-site residue. The Zn(2+) site is built by H83 and H180. G181 is a binding site for dihydroxyacetone phosphate. Residue H208 coordinates Zn(2+). Residues 209-211 (GAS) and 230-233 (NVAT) contribute to the dihydroxyacetone phosphate site.

The protein belongs to the class II fructose-bisphosphate aldolase family. TagBP aldolase GatY subfamily. In terms of assembly, forms a complex with GatZ. The cofactor is Zn(2+).

The enzyme catalyses D-tagatofuranose 1,6-bisphosphate = D-glyceraldehyde 3-phosphate + dihydroxyacetone phosphate. Its pathway is carbohydrate metabolism; D-tagatose 6-phosphate degradation; D-glyceraldehyde 3-phosphate and glycerone phosphate from D-tagatose 6-phosphate: step 2/2. Its function is as follows. Catalytic subunit of the tagatose-1,6-bisphosphate aldolase GatYZ, which catalyzes the reversible aldol condensation of dihydroxyacetone phosphate (DHAP or glycerone-phosphate) with glyceraldehyde 3-phosphate (G3P) to produce tagatose 1,6-bisphosphate (TBP). Requires GatZ subunit for full activity and stability. Is involved in the catabolism of galactitol. The polypeptide is D-tagatose-1,6-bisphosphate aldolase subunit GatY (Salmonella typhi).